The primary structure comprises 127 residues: Aspartate 1-decarboxylase (127 aa).

Residue serine 25 is the Schiff-base intermediate with substrate; via pyruvic acid of the active site. The residue at position 25 (serine 25) is a Pyruvic acid (Ser). Threonine 57 lines the substrate pocket. The active-site Proton donor is the tyrosine 58. 73–75 (GAA) is a substrate binding site.

This sequence belongs to the PanD family. Heterooctamer of four alpha and four beta subunits. Pyruvate serves as cofactor. In terms of processing, is synthesized initially as an inactive proenzyme, which is activated by self-cleavage at a specific serine bond to produce a beta-subunit with a hydroxyl group at its C-terminus and an alpha-subunit with a pyruvoyl group at its N-terminus.

The protein resides in the cytoplasm. It catalyses the reaction L-aspartate + H(+) = beta-alanine + CO2. Its pathway is cofactor biosynthesis; (R)-pantothenate biosynthesis; beta-alanine from L-aspartate: step 1/1. Functionally, catalyzes the pyruvoyl-dependent decarboxylation of aspartate to produce beta-alanine. The protein is Aspartate 1-decarboxylase of Aliarcobacter butzleri (strain RM4018) (Arcobacter butzleri).